The following is a 523-amino-acid chain: MSAQRLNAAERDLEKFIKFLVLKSTQVVVQSRLGEKMQTQCNPLAGSDWFNIAVQDHPEVLDETKRALNLKTGESILQRLPLCVEISLKTTEGDQMVLEVWSLDLLQPQNGASPATNDLNPEGQTLKAAHAIYNRMGIMLKSLISLTRTTPAYKLSRRQCPDSYGIFYRIYVDRPQVHTLGEGHKHVKIGQLSTIVGSLVMSVAYRTKLTISPTAAQSESNTIMLKSDHFRPATDANTPGNQQQTQNGTVVAKKLGLGALNPAQGTADRRFIDIEKPLRPGAFTDMGKLKQYTEDDFVLPETPPFEWLLRGRGSVESLNRLDNNSVASVNISNNNNSTQDSKFNQISNLNNNSAGFKSFEKNSENSVSPIKSLLIPASATATYRHHSEPSLQPPPDDDNLLKELHFPFASPTSHVNDLAKFYRECYHAPPLKGLNELQAEISSISSTPPASSGSGGVAACGPTAAATAIATSSADASAMDDLSRQLEQFETSLEDYDKLVSQFGLTGSSSTGSRSSGGLQMSN.

A Phosphoserine modification is found at Ser-227. Thr-238 is subject to Phosphothreonine. Phosphoserine occurs at positions 314 and 317. Positions 504 to 523 (GLTGSSSTGSRSSGGLQMSN) are disordered.

Belongs to the ATG13 family. Metazoan subfamily. In terms of assembly, interacts with Atg1. In terms of processing, phosphorylated in a nutrient-, TOR- and Atg1 kinase-dependent manner.

Its subcellular location is the cytoplasm. The protein localises to the cytosol. The protein resides in the preautophagosomal structure. In terms of biological role, autophagy factor required for autophagosome formation. Target of the TOR kinase signaling pathway that regulates autophagy through the control of the phosphorylation status of Atg13 and Atg1. The Atg1-Atg13 complex functions at multiple levels to mediate and adjust nutrient-dependent autophagic signaling. Involved in the autophagic degradation of dBruce which controls DNA fragmentation in nurse cells. This chain is Autophagy-related protein 13 homolog (Atg13), found in Drosophila melanogaster (Fruit fly).